The chain runs to 370 residues: Phospho-2-dehydro-3-deoxyheptonate aldolase, tyrosine-inhibited (370 aa).

N-acetylserine is present on serine 2.

The protein belongs to the class-I DAHP synthase family.

The enzyme catalyses D-erythrose 4-phosphate + phosphoenolpyruvate + H2O = 7-phospho-2-dehydro-3-deoxy-D-arabino-heptonate + phosphate. It functions in the pathway metabolic intermediate biosynthesis; chorismate biosynthesis; chorismate from D-erythrose 4-phosphate and phosphoenolpyruvate: step 1/7. With respect to regulation, inhibited by tyrosine. Stereospecific condensation of phosphoenolpyruvate (PEP) and D-erythrose-4-phosphate (E4P) giving rise to 3-deoxy-D-arabino-heptulosonate-7-phosphate (DAHP). This Saccharomyces cerevisiae (strain ATCC 204508 / S288c) (Baker's yeast) protein is Phospho-2-dehydro-3-deoxyheptonate aldolase, tyrosine-inhibited (ARO4).